The sequence spans 601 residues: Rhizobactin siderophore biosynthesis protein RhbF (601 aa).

Belongs to the IucA/IucC family.

It participates in siderophore biosynthesis; rhizobactin biosynthesis. The sequence is that of Rhizobactin siderophore biosynthesis protein RhbF (rhbF) from Rhizobium meliloti (strain 1021) (Ensifer meliloti).